Consider the following 309-residue polypeptide: Porphobilinogen deaminase (309 aa).

C241 is subject to S-(dipyrrolylmethanemethyl)cysteine.

This sequence belongs to the HMBS family. In terms of assembly, monomer. It depends on dipyrromethane as a cofactor.

The catalysed reaction is 4 porphobilinogen + H2O = hydroxymethylbilane + 4 NH4(+). It participates in porphyrin-containing compound metabolism; protoporphyrin-IX biosynthesis; coproporphyrinogen-III from 5-aminolevulinate: step 2/4. Tetrapolymerization of the monopyrrole PBG into the hydroxymethylbilane pre-uroporphyrinogen in several discrete steps. In Bacillus cereus (strain AH187), this protein is Porphobilinogen deaminase.